The primary structure comprises 493 residues: Glutamate--tRNA ligase (493 aa).

The 'HIGH' region signature appears at 10 to 20 (PSPTGDPHVGT). The 'KMSKS' region motif lies at 251–255 (KLSKR). K254 serves as a coordination point for ATP.

Belongs to the class-I aminoacyl-tRNA synthetase family. Glutamate--tRNA ligase type 1 subfamily. As to quaternary structure, monomer.

It localises to the cytoplasm. It carries out the reaction tRNA(Glu) + L-glutamate + ATP = L-glutamyl-tRNA(Glu) + AMP + diphosphate. In terms of biological role, catalyzes the attachment of glutamate to tRNA(Glu) in a two-step reaction: glutamate is first activated by ATP to form Glu-AMP and then transferred to the acceptor end of tRNA(Glu). The polypeptide is Glutamate--tRNA ligase (Pseudomonas putida (strain ATCC 700007 / DSM 6899 / JCM 31910 / BCRC 17059 / LMG 24140 / F1)).